Consider the following 522-residue polypeptide: Maturase K (522 aa).

The protein belongs to the intron maturase 2 family. MatK subfamily.

Its subcellular location is the plastid. The protein resides in the chloroplast. Its function is as follows. Usually encoded in the trnK tRNA gene intron. Probably assists in splicing its own and other chloroplast group II introns. The polypeptide is Maturase K (Micranthus junceus (Micranthus plantagineus var. junceus)).